A 1026-amino-acid polypeptide reads, in one-letter code: Multidrug resistance protein MdtC (1026 aa).

Transmembrane regions (helical) follow at residues 15-35 (ILIA…LPVA), 333-353 (EVEE…FLFL), 360-380 (LIPA…MYLC), 387-407 (LSLM…IVVL), 431-451 (VGFT…PLLL), 463-483 (FAVT…TLTP), 528-548 (LVGV…IAIP), 853-873 (LILI…LYES), 897-917 (LFNA…IGIV), 953-973 (PIMM…LSGG), and 984-1004 (ITIV…TPVV).

The protein belongs to the resistance-nodulation-cell division (RND) (TC 2.A.6) family. MdtC subfamily. In terms of assembly, part of a tripartite efflux system composed of MdtA, MdtB and MdtC. MdtC forms a heteromultimer with MdtB.

The protein localises to the cell inner membrane. The protein is Multidrug resistance protein MdtC of Salmonella paratyphi A (strain AKU_12601).